Consider the following 249-residue polypeptide: Caffeoyl-CoA O-methyltransferase (249 aa).

Residue K21 coordinates substrate. S-adenosyl-L-methionine contacts are provided by residues T63, E85, 87-88, S93, D111, and A140; that span reads GV. Position 162 (D162) interacts with substrate. D162 lines the a divalent metal cation pocket. Residue D164 participates in S-adenosyl-L-methionine binding. The a divalent metal cation site is built by D188 and N189. Residue N193 participates in substrate binding.

The protein belongs to the class I-like SAM-binding methyltransferase superfamily. Cation-dependent O-methyltransferase family. CCoAMT subfamily. As to quaternary structure, homodimer. A divalent metal cation serves as cofactor.

It carries out the reaction (E)-caffeoyl-CoA + S-adenosyl-L-methionine = (E)-feruloyl-CoA + S-adenosyl-L-homocysteine + H(+). Its pathway is aromatic compound metabolism; phenylpropanoid biosynthesis. In terms of biological role, methylates caffeoyl-CoA to feruloyl-CoA and 5-hydroxyferuloyl-CoA to sinapoyl-CoA. Plays a role in the synthesis of feruloylated polysaccharides. Involved in the reinforcement of the plant cell wall. Also involved in the responding to wounding or pathogen challenge by the increased formation of cell wall-bound ferulic acid polymers. The protein is Caffeoyl-CoA O-methyltransferase of Eucalyptus gunnii (Cider gum).